The chain runs to 463 residues: Argininosuccinate lyase (463 aa).

This sequence belongs to the lyase 1 family. Argininosuccinate lyase subfamily.

It localises to the cytoplasm. The catalysed reaction is 2-(N(omega)-L-arginino)succinate = fumarate + L-arginine. Its pathway is amino-acid biosynthesis; L-arginine biosynthesis; L-arginine from L-ornithine and carbamoyl phosphate: step 3/3. This Methylorubrum populi (strain ATCC BAA-705 / NCIMB 13946 / BJ001) (Methylobacterium populi) protein is Argininosuccinate lyase.